The following is a 147-amino-acid chain: Pathogenesis-related protein PR-4A (147 aa).

A signal peptide spans 1–25; sequence MERVNNYKLCVALLIISMVMAMAAA. The Barwin domain occupies 26–147; that stretch reads QSATNVRSTY…VNYEFVNCND (122 aa). Cystine bridges form between Cys54–Cys86, Cys75–Cys109, and Cys89–Cys145.

It is found in the secreted. The protein resides in the cell wall. The protein is Pathogenesis-related protein PR-4A of Nicotiana tabacum (Common tobacco).